Reading from the N-terminus, the 270-residue chain is Imidazole glycerol phosphate synthase subunit HisF (270 aa).

Catalysis depends on residues Asp11 and Asp130.

This sequence belongs to the HisA/HisF family. Heterodimer of HisH and HisF.

Its subcellular location is the cytoplasm. It carries out the reaction 5-[(5-phospho-1-deoxy-D-ribulos-1-ylimino)methylamino]-1-(5-phospho-beta-D-ribosyl)imidazole-4-carboxamide + L-glutamine = D-erythro-1-(imidazol-4-yl)glycerol 3-phosphate + 5-amino-1-(5-phospho-beta-D-ribosyl)imidazole-4-carboxamide + L-glutamate + H(+). The protein operates within amino-acid biosynthesis; L-histidine biosynthesis; L-histidine from 5-phospho-alpha-D-ribose 1-diphosphate: step 5/9. IGPS catalyzes the conversion of PRFAR and glutamine to IGP, AICAR and glutamate. The HisF subunit catalyzes the cyclization activity that produces IGP and AICAR from PRFAR using the ammonia provided by the HisH subunit. The chain is Imidazole glycerol phosphate synthase subunit HisF from Sorangium cellulosum (strain So ce56) (Polyangium cellulosum (strain So ce56)).